Consider the following 467-residue polypeptide: Asparagine--tRNA ligase (467 aa).

This sequence belongs to the class-II aminoacyl-tRNA synthetase family. Homodimer.

Its subcellular location is the cytoplasm. The catalysed reaction is tRNA(Asn) + L-asparagine + ATP = L-asparaginyl-tRNA(Asn) + AMP + diphosphate + H(+). This is Asparagine--tRNA ligase from Bacteroides fragilis (strain ATCC 25285 / DSM 2151 / CCUG 4856 / JCM 11019 / LMG 10263 / NCTC 9343 / Onslow / VPI 2553 / EN-2).